The sequence spans 312 residues: 2,3-dihydroxyphenylpropionate/2,3-dihydroxicinnamic acid 1,2-dioxygenase (312 aa).

H115 acts as the Proton donor in catalysis. The Proton acceptor role is filled by H179.

The protein belongs to the LigB/MhpB extradiol dioxygenase family. In terms of assembly, homotetramer. It depends on Fe(2+) as a cofactor.

The catalysed reaction is 3-(2,3-dihydroxyphenyl)propanoate + O2 = (2Z,4E)-2-hydroxy-6-oxonona-2,4-dienedioate + H(+). It catalyses the reaction (2E)-3-(2,3-dihydroxyphenyl)prop-2-enoate + O2 = (2Z,4E,7E)-2-hydroxy-6-oxonona-2,4,7-trienedioate + H(+). The protein operates within aromatic compound metabolism; 3-phenylpropanoate degradation. Catalyzes the non-heme iron(II)-dependent oxidative cleavage of 2,3-dihydroxyphenylpropionic acid and 2,3-dihydroxicinnamic acid into 2-hydroxy-6-ketononadienedioate and 2-hydroxy-6-ketononatrienedioate, respectively. The chain is 2,3-dihydroxyphenylpropionate/2,3-dihydroxicinnamic acid 1,2-dioxygenase from Azotobacter vinelandii (strain DJ / ATCC BAA-1303).